We begin with the raw amino-acid sequence, 272 residues long: MADTPAEYIQHHLQNLVYGSHPEKGWIIAQTPEEVKAMGFWAVHVDTLGWSLFMGLIFITLFRMAAKKAVTGVPSGLQNMAEMCIEFVQGIVKDTFHGKNPLVAPLALTIFVWVFLMNSLKWIPVDYIPGLAHAMGLPYFKIVPTADPNGTFGISLGVFLLIIFYSIKVKGVGGFTKELSFTPFNHWALIPFNLFLEIIGLLTKPLSLALRLFGNMYAGEVVFILIALLPFYVQWGLNVPWAIFHILVIPLQAFIFMVLTVVYLSAAHEDHH.

7 consecutive transmembrane segments (helical) span residues 39–59 (GFWA…LIFI), 103–123 (VAPL…LKWI), 124–144 (PVDY…KIVP), 152–172 (FGIS…VKGV), 181–201 (FTPF…IIGL), 221–241 (VVFI…NVPW), and 242–262 (AIFH…LTVV).

The protein belongs to the ATPase A chain family. In terms of assembly, F-type ATPases have 2 components, CF(1) - the catalytic core - and CF(0) - the membrane proton channel. CF(1) has five subunits: alpha(3), beta(3), gamma(1), delta(1), epsilon(1). CF(0) has three main subunits: a(1), b(2) and c(9-12). The alpha and beta chains form an alternating ring which encloses part of the gamma chain. CF(1) is attached to CF(0) by a central stalk formed by the gamma and epsilon chains, while a peripheral stalk is formed by the delta and b chains.

The protein localises to the cell inner membrane. In terms of biological role, key component of the proton channel; it plays a direct role in the translocation of protons across the membrane. The chain is ATP synthase subunit a from Ectopseudomonas mendocina (strain ymp) (Pseudomonas mendocina).